The following is a 94-amino-acid chain: DNA-directed RNA polymerase subunit omega (94 aa).

Belongs to the RNA polymerase subunit omega family. The RNAP catalytic core consists of 2 alpha, 1 beta, 1 beta' and 1 omega subunit. When a sigma factor is associated with the core the holoenzyme is formed, which can initiate transcription.

The enzyme catalyses RNA(n) + a ribonucleoside 5'-triphosphate = RNA(n+1) + diphosphate. Promotes RNA polymerase assembly. Latches the N- and C-terminal regions of the beta' subunit thereby facilitating its interaction with the beta and alpha subunits. This is DNA-directed RNA polymerase subunit omega from Frankia alni (strain DSM 45986 / CECT 9034 / ACN14a).